Here is a 71-residue protein sequence, read N- to C-terminus: uncharacterized protein (71 aa).

This is an uncharacterized protein from Stutzerimonas stutzeri (strain A1501) (Pseudomonas stutzeri).